A 407-amino-acid chain; its full sequence is Putative two-component response regulator ARR19 (407 aa).

Positions 35-150 (NVLVVDTNFT…VMANIWQHIV (116 aa)) constitute a Response regulatory domain. Position 86 is a 4-aspartylphosphate (Asp86). A Nuclear localization signal motif is present at residues 214–217 (RKPR). The myb-like GARP DNA-binding region spans 217–271 (RMTWTEELHQKFLEAIEIIGGIEKANPKVLVECLQEMRIEGITRSNVASHLQKHR).

It belongs to the ARR family. Type-B subfamily. In terms of assembly, binds the target DNA as a monomer. Post-translationally, two-component system major event consists of a His-to-Asp phosphorelay between a sensor histidine kinase (HK) and a response regulator (RR). In plants, the His-to-Asp phosphorelay involves an additional intermediate named Histidine-containing phosphotransfer protein (HPt). This multistep phosphorelay consists of a His-Asp-His-Asp sequential transfer of a phosphate group between first a His and an Asp of the HK protein, followed by the transfer to a conserved His of the HPt protein and finally the transfer to an Asp in the receiver domain of the RR protein. In terms of tissue distribution, detected in trichomes and siliques.

Its subcellular location is the nucleus. Its function is as follows. Putative transcriptional activator that binds specifically to the DNA sequence 5'-[AG]GATT-3'. Functions as a response regulator involved in His-to-Asp phosphorelay signal transduction system. Phosphorylation of the Asp residue in the receiver domain activates the ability of the protein to promote the transcription of target genes. Could directly activate some type-A response regulators in response to cytokinins. This Arabidopsis thaliana (Mouse-ear cress) protein is Putative two-component response regulator ARR19 (ARR19).